We begin with the raw amino-acid sequence, 632 residues long: Sodium- and chloride-dependent GABA transporter 3 (632 aa).

The tract at residues methionine 1–valine 41 is disordered. The Cytoplasmic portion of the chain corresponds to methionine 1–glutamate 58. A Phosphoserine modification is found at serine 21. 3 consecutive transmembrane segments (helical) span residues phenylalanine 59–leucine 79, alanine 87–leucine 106, and glycine 131–leucine 151. Residues alanine 152–arginine 225 lie on the Extracellular side of the membrane. Residues asparagine 187, asparagine 190, and asparagine 198 are each glycosylated (N-linked (GlcNAc...) asparagine). Helical transmembrane passes span tryptophan 226–tryptophan 244, valine 253–isoleucine 270, isoleucine 306–tyrosine 323, isoleucine 335–leucine 356, methionine 389–leucine 408, leucine 438–threonine 456, glycine 473–serine 493, tryptophan 514–isoleucine 533, and isoleucine 553–isoleucine 571. The Cytoplasmic segment spans residues threonine 572–phenylalanine 632.

It belongs to the sodium:neurotransmitter symporter (SNF) (TC 2.A.22) family. SLC6A11 subfamily. As to expression, widespread distribution in the brain.

Its subcellular location is the cell membrane. It carries out the reaction 4-aminobutanoate(out) + chloride(out) + 2 Na(+)(out) = 4-aminobutanoate(in) + chloride(in) + 2 Na(+)(in). It catalyses the reaction taurine(out) + chloride(out) + 2 Na(+)(out) = taurine(in) + chloride(in) + 2 Na(+)(in). The enzyme catalyses beta-alanine(out) + chloride(out) + 2 Na(+)(out) = beta-alanine(in) + chloride(in) + 2 Na(+)(in). The catalysed reaction is hypotaurine(out) + chloride(out) + 2 Na(+)(out) = hypotaurine(in) + chloride(in) + 2 Na(+)(in). With respect to regulation, GABA transport is inhibited by SNAP-5114. In terms of biological role, mediates sodium- and chloride-dependent transport of gamma-aminobutyric acid (GABA). Can also mediate transport of beta-alanine and to a lower extent that of taurine and hypotaurine. The protein is Sodium- and chloride-dependent GABA transporter 3 (SLC6A11) of Homo sapiens (Human).